The primary structure comprises 232 residues: Uracil-DNA glycosylase (232 aa).

Aspartate 71 serves as the catalytic Proton acceptor.

The protein belongs to the uracil-DNA glycosylase (UDG) superfamily. UNG family.

Its subcellular location is the cytoplasm. The catalysed reaction is Hydrolyzes single-stranded DNA or mismatched double-stranded DNA and polynucleotides, releasing free uracil.. Functionally, excises uracil residues from the DNA which can arise as a result of misincorporation of dUMP residues by DNA polymerase or due to deamination of cytosine. The polypeptide is Uracil-DNA glycosylase (Azotobacter vinelandii (strain DJ / ATCC BAA-1303)).